The following is a 625-amino-acid chain: RalA-binding protein 1 (625 aa).

Basic and acidic residues-rich tracts occupy residues 1 to 11 (MDFDSPEEKEF) and 20 to 60 (ADAK…KDRG). The interval 1-172 (MDFDSPEEKE…SKQLSQQQDD (172 aa)) is disordered. Phosphoserine occurs at positions 68 and 69. Residues 94–157 (KSKEKREKSR…EKDKKADKKD (64 aa)) are compositionally biased toward basic and acidic residues. The Rho-GAP domain maps to 191–385 (VSLATERSRC…PLTSTSPKLP (195 aa)). The interval 443 to 500 (QEKTAEEVDNSSSAPPAVASEDTTDSKPAGTPAVSTNNSISQEEPKTDTLTPKDAPND) is disordered. Residues 475–484 (AVSTNNSISQ) show a composition bias toward polar residues.

In terms of assembly, interacts with CycB and numb.

In terms of biological role, participates in receptor endocytosis during interphase, is also involved in mitotic processes when endocytosis is switched off. The protein is RalA-binding protein 1 of Drosophila melanogaster (Fruit fly).